We begin with the raw amino-acid sequence, 449 residues long: MITLRKLPLAVAVAAGVMSAQAMAVDFHGYARSGIGWTGSGGEQQCFQATGAQSKYRLGNECETYAELKLGQEVWKEGDKSFYFDTNVAYSVAQQNDWEATDPAFREANVQGKNLIDWLPGSTIWAGKRFYQRHDVHMIDFYYWDISGPGAGIENIDLGFGKLSLAATRSQEAGGSYTFSSQDIYNSSKDTANDVFDVRLAGLETNPDGVLELGVDYGRANTTDDYRLADGASKDGWMFTAEHTQSMLKGYNKFVVQYATDAMTTQGKGIPQGSYGSTFDIGEGDDQLHYVDRYVNNNGKLWRILDHGAISLGDRWDLMYVGMFQKQDLDNDLGTDWWTVGVRPMFKWTPIMSTLLEVGYDNVKSQQTGDRNNQYKITLAQQWQAGDSIWSRPAIRLFATYAKWDEKWGYIKDGDNTLRYAASNNSGFNTTSRGDNDEWSFGAQMEIWW.

The first 24 residues, 1–24 (MITLRKLPLAVAVAAGVMSAQAMA), serve as a signal peptide directing secretion.

This sequence belongs to the porin LamB (TC 1.B.3) family. Homotrimer formed of three 18-stranded antiparallel beta-barrels, containing three independent channels.

The protein localises to the cell outer membrane. It carries out the reaction beta-maltose(in) = beta-maltose(out). In terms of biological role, involved in the transport of maltose and maltodextrins. The chain is Maltoporin from Citrobacter koseri (strain ATCC BAA-895 / CDC 4225-83 / SGSC4696).